The sequence spans 295 residues: Small ribosomal subunit biogenesis GTPase RsgA (295 aa).

Positions 68–228 (KNLLTKPHVA…VVDTPGFANL (161 aa)) constitute a CP-type G domain. GTP is bound by residues 117–120 (NKMD) and 170–178 (GLSGVGKSS). The Zn(2+) site is built by Cys250, Cys255, His257, and Cys263.

The protein belongs to the TRAFAC class YlqF/YawG GTPase family. RsgA subfamily. In terms of assembly, monomer. Associates with 30S ribosomal subunit, binds 16S rRNA. Zn(2+) serves as cofactor.

The protein resides in the cytoplasm. One of several proteins that assist in the late maturation steps of the functional core of the 30S ribosomal subunit. Helps release RbfA from mature subunits. May play a role in the assembly of ribosomal proteins into the subunit. Circularly permuted GTPase that catalyzes slow GTP hydrolysis, GTPase activity is stimulated by the 30S ribosomal subunit. The polypeptide is Small ribosomal subunit biogenesis GTPase RsgA (Thermotoga maritima (strain ATCC 43589 / DSM 3109 / JCM 10099 / NBRC 100826 / MSB8)).